The chain runs to 144 residues: Maximins 7/H1 (144 aa).

An N-terminal signal peptide occupies residues Met1 to Ala18. A propeptide spanning residues Arg19–Arg43 is cleaved from the precursor. Asn70 bears the Asparagine amide mark. A propeptide spanning residues Thr74–Arg123 is cleaved from the precursor. At Leu143 the chain carries Leucine amide.

This sequence belongs to the bombinin family. Expressed by the skin glands.

It is found in the secreted. In terms of biological role, maximin-7 shows antimicrobial activity against bacteria and against the fungus C.albicans. It has little hemolytic activity. Maximin-H1 shows antibacterial activity against both Gram-positive and Gram-negative bacteria. It also shows antimicrobial activity against the fungus C.albicans. Shows strong hemolytic activity. This is Maximins 7/H1 from Bombina maxima (Giant fire-bellied toad).